Here is a 573-residue protein sequence, read N- to C-terminus: Lauric acid 10-hydroxylase (573 aa).

2 helical membrane passes run 3-23 (YVNI…LMSL) and 298-318 (LFPT…LLIF). Cysteine 516 lines the heme pocket.

This sequence belongs to the cytochrome P450 family. The cofactor is heme. Mostly expressed in flowers and leaves and, at low levels, in roots and stems.

The protein resides in the endoplasmic reticulum membrane. It carries out the reaction an omega-methyl-medium-chain fatty acid + reduced [NADPH--hemoprotein reductase] + O2 = an omega-hydroxy-medium-chain fatty acid + oxidized [NADPH--hemoprotein reductase] + H2O + H(+). The catalysed reaction is decanoate + reduced [NADPH--hemoprotein reductase] + O2 = 10-hydroxydecanoate + oxidized [NADPH--hemoprotein reductase] + H2O + H(+). It catalyses the reaction dodecanoate + reduced [NADPH--hemoprotein reductase] + O2 = 12-hydroxydodecanoate + oxidized [NADPH--hemoprotein reductase] + H2O + H(+). Its pathway is lipid metabolism; fatty acid metabolism. Its function is as follows. Cytochrome P450 hydroxylase catalyzing the conversion of decanoate (capric acid) and dodecanoate (lauric acid) to their corresponding omega-hydroxy metabolites, 10-hydroxydecanoate and 12-hydroxydodecanoate, respectively; these hydroxylated components affect plant growth, including reducing root elongation. This chain is Lauric acid 10-hydroxylase, found in Petunia hybrida (Petunia).